A 144-amino-acid chain; its full sequence is NADH dehydrogenase [ubiquinone] 1 alpha subcomplex subunit 13 (144 aa).

Residue A2 is modified to N-acetylalanine. Residues 30-51 form a helical membrane-spanning segment; that stretch reads LSGYSMLAIGIGTLIYGHWSIM.

It belongs to the complex I NDUFA13 subunit family. Complex I is composed of 45 different subunits. Interacts with CARD15, but not with CARD4. Interacts with STAT3, but not with STAT1, STAT2 and STAT5A. Interacts with OLFM4.

It is found in the mitochondrion inner membrane. It localises to the nucleus. Accessory subunit of the mitochondrial membrane respiratory chain NADH dehydrogenase (Complex I), that is believed not to be involved in catalysis. Complex I functions in the transfer of electrons from NADH to the respiratory chain. The immediate electron acceptor for the enzyme is believed to be ubiquinone. Involved in the interferon/all-trans-retinoic acid (IFN/RA) induced cell death. This apoptotic activity is inhibited by interaction with viral IRF1. Prevents the transactivation of STAT3 target genes. May play a role in CARD15-mediated innate mucosal responses and serve to regulate intestinal epithelial cell responses to microbes. This chain is NADH dehydrogenase [ubiquinone] 1 alpha subcomplex subunit 13 (NDUFA13), found in Pan troglodytes (Chimpanzee).